Here is a 582-residue protein sequence, read N- to C-terminus: Acylamino-acid-releasing enzyme (582 aa).

Catalysis depends on charge relay system residues S445, D524, and H556.

This sequence belongs to the peptidase S9C family.

Its subcellular location is the cytoplasm. The catalysed reaction is Cleavage of an N-acetyl or N-formyl amino acid from the N-terminus of a polypeptide.. Its function is as follows. This enzyme catalyzes the hydrolysis of the N-terminal peptide bond of an N-acetylated peptide to generate an N-acetylated amino acid and a peptide with a free N-terminus. This is Acylamino-acid-releasing enzyme from Aeropyrum pernix (strain ATCC 700893 / DSM 11879 / JCM 9820 / NBRC 100138 / K1).